Here is a 467-residue protein sequence, read N- to C-terminus: Adenosylhomocysteinase (467 aa).

The substrate site is built by Thr-68, Asp-144, and Glu-169. 170-172 (TTT) lines the NAD(+) pocket. Positions 199 and 203 each coordinate substrate. NAD(+) contacts are provided by residues Asn-204, 233–238 (GYGDVG), Glu-256, Asn-305, 326–328 (IGH), and Asn-373.

This sequence belongs to the adenosylhomocysteinase family. The cofactor is NAD(+).

Its subcellular location is the cytoplasm. The enzyme catalyses S-adenosyl-L-homocysteine + H2O = L-homocysteine + adenosine. The protein operates within amino-acid biosynthesis; L-homocysteine biosynthesis; L-homocysteine from S-adenosyl-L-homocysteine: step 1/1. May play a key role in the regulation of the intracellular concentration of adenosylhomocysteine. This chain is Adenosylhomocysteinase, found in Acinetobacter baylyi (strain ATCC 33305 / BD413 / ADP1).